The sequence spans 558 residues: NXPE family member 2 (558 aa).

Residues 17–37 form a helical membrane-spanning segment; that stretch reads ASARKLFLIVLIIFVFWVVFM.

This sequence belongs to the NXPE family.

Its subcellular location is the membrane. The chain is NXPE family member 2 (Nxpe2) from Mus musculus (Mouse).